Here is a 213-residue protein sequence, read N- to C-terminus: Protein big brother (213 aa).

Belongs to the CBF-beta family.

The protein resides in the nucleus. In terms of biological role, regulates the DNA-binding properties of Runt. This Drosophila melanogaster (Fruit fly) protein is Protein big brother (Bgb).